We begin with the raw amino-acid sequence, 195 residues long: Myelin basic protein (195 aa).

Ala2 carries the N-acetylalanine modification. Ser8 and Ser13 each carry phosphoserine. Residue Tyr15 is modified to Phosphotyrosine. Thr18 is modified (phosphothreonine). The residue at position 20 (Ser20) is a Phosphoserine. Phosphothreonine is present on Thr21. Arg26 and Arg32 each carry citrulline. Phosphothreonine is present on Thr36. Position 41 is a phosphoserine (Ser41). Arg44 and Arg50 each carry omega-N-methylarginine. A disordered region spans residues 45–79 (FFSGDRGAPKRGSGKVPWLKQSRSPLPSHARSRPG). Ser57 is modified (phosphoserine). Residue Thr92 is modified to Phosphothreonine. Position 94 is a phosphotyrosine (Tyr94). Ser101 is modified (phosphoserine). Thr104, Thr119, and Thr122 each carry phosphothreonine. The interval 117–139 (IVTPRTPPPSQGKGRGLSLSRFS) is disordered. At Gln127 the chain carries Deamidated glutamine. An Omega-N-methylarginine; alternate modification is found at Arg131. Arg131 carries the symmetric dimethylarginine; alternate modification. Ser139 bears the Phosphoserine mark. Position 146 is an N6-acetyllysine (Lys146). Arg154 is modified (citrulline). Deamidated glutamine is present on Gln172. The residue at position 184 (Arg184) is a Citrulline. Ser186 is modified (phosphoserine). Ser190 carries the phosphoserine; by UHMK1 modification. Arg195 carries the post-translational modification Citrulline.

Belongs to the myelin basic protein family. Homodimer. In terms of processing, as in other animals, several charge isomers may be produced as a result of optional post-translational modifications, such as phosphorylation of serine or threonine residues, deamidation of glutamine or asparagine residues, citrullination and methylation of arginine residues. Arg-131 was found to be 44% monomethylated and 11% symmetrically dimethylated. Post-translationally, phosphorylated by TAOK2, VRK2, MAPK11, MAPK12, MAPK14 and MINK1. In terms of processing, proteolytically cleaved in B cell lysosomes by cathepsin CTSG which degrades the major immunogenic MBP epitope and prevents the activation of MBP-specific autoreactive T cells. In terms of tissue distribution, found in both the central and the peripheral nervous system.

Its subcellular location is the myelin membrane. Its function is as follows. Is, with PLP, the most abundant protein component of the myelin membrane in the CNS. Has a role in both the formation and stabilization of this compact multilayer arrangement of bilayers. Each splice variant and charge isomer may have a specialized function in the assembly of an optimized, biochemically functional myelin membrane. The polypeptide is Myelin basic protein (Mbp) (Rattus norvegicus (Rat)).